We begin with the raw amino-acid sequence, 227 residues long: Triosephosphate isomerase (227 aa).

Position 9–11 (9–11 (NFK)) interacts with substrate. Histidine 93 serves as the catalytic Electrophile. Glutamate 141 serves as the catalytic Proton acceptor. Substrate contacts are provided by residues isoleucine 146, glycine 180, and 201–202 (AS).

It belongs to the triosephosphate isomerase family. Homotetramer; dimer of dimers.

The protein localises to the cytoplasm. The catalysed reaction is D-glyceraldehyde 3-phosphate = dihydroxyacetone phosphate. The protein operates within carbohydrate biosynthesis; gluconeogenesis. It functions in the pathway carbohydrate degradation; glycolysis; D-glyceraldehyde 3-phosphate from glycerone phosphate: step 1/1. In terms of biological role, involved in the gluconeogenesis. Catalyzes stereospecifically the conversion of dihydroxyacetone phosphate (DHAP) to D-glyceraldehyde-3-phosphate (G3P). The sequence is that of Triosephosphate isomerase from Saccharolobus solfataricus (strain ATCC 35092 / DSM 1617 / JCM 11322 / P2) (Sulfolobus solfataricus).